Consider the following 263-residue polypeptide: Putative TATA-binding protein pB263R (263 aa).

The protein belongs to the asfivirus B263R family.

In terms of biological role, putative TATA-binding protein. In African swine fever virus (isolate Tick/Malawi/Lil 20-1/1983) (ASFV), this protein is Putative TATA-binding protein pB263R.